The chain runs to 388 residues: Succinate--CoA ligase [ADP-forming] subunit beta (388 aa).

Residues 9 to 244 (KEILRKYNVP…LDEEDANEIE (236 aa)) form the ATP-grasp domain. Residues Lys46, 53–55 (GRG), Glu99, Ala102, and Glu107 contribute to the ATP site. Residues Asn199 and Asp213 each contribute to the Mg(2+) site. Residues Asn264 and 321 to 323 (GIM) each bind substrate.

This sequence belongs to the succinate/malate CoA ligase beta subunit family. In terms of assembly, heterotetramer of two alpha and two beta subunits. It depends on Mg(2+) as a cofactor.

The enzyme catalyses succinate + ATP + CoA = succinyl-CoA + ADP + phosphate. It carries out the reaction GTP + succinate + CoA = succinyl-CoA + GDP + phosphate. It participates in carbohydrate metabolism; tricarboxylic acid cycle; succinate from succinyl-CoA (ligase route): step 1/1. Its function is as follows. Succinyl-CoA synthetase functions in the citric acid cycle (TCA), coupling the hydrolysis of succinyl-CoA to the synthesis of either ATP or GTP and thus represents the only step of substrate-level phosphorylation in the TCA. The beta subunit provides nucleotide specificity of the enzyme and binds the substrate succinate, while the binding sites for coenzyme A and phosphate are found in the alpha subunit. The sequence is that of Succinate--CoA ligase [ADP-forming] subunit beta from Ralstonia nicotianae (strain ATCC BAA-1114 / GMI1000) (Ralstonia solanacearum).